We begin with the raw amino-acid sequence, 220 residues long: Large ribosomal subunit protein uL3 (220 aa).

It belongs to the universal ribosomal protein uL3 family. As to quaternary structure, part of the 50S ribosomal subunit. Forms a cluster with proteins L14 and L19.

Its function is as follows. One of the primary rRNA binding proteins, it binds directly near the 3'-end of the 23S rRNA, where it nucleates assembly of the 50S subunit. This chain is Large ribosomal subunit protein uL3, found in Staphylococcus carnosus (strain TM300).